A 206-amino-acid chain; its full sequence is HTH-type transcriptional regulator Hpr (206 aa).

Positions 13-157 (ALLFSQRMAQ…MMSIIRHIYG (145 aa)) constitute an HTH marR-type domain. Residues 63–86 (ISEIAKFGVMHVSTAFNFSKKLEE) constitute a DNA-binding region (H-T-H motif). Positions 177–206 (SEEGKMKKKQEAKEAGESIEVDKPLEPLKN) are disordered. A compositionally biased stretch (basic and acidic residues) spans 178–206 (EEGKMKKKQEAKEAGESIEVDKPLEPLKN).

Homodimer.

Its function is as follows. Negative regulator of protease production and sporulation. The chain is HTH-type transcriptional regulator Hpr from Bacillus licheniformis (strain ATCC 14580 / DSM 13 / JCM 2505 / CCUG 7422 / NBRC 12200 / NCIMB 9375 / NCTC 10341 / NRRL NRS-1264 / Gibson 46).